Consider the following 703-residue polypeptide: Collagen alpha-2(VIII) chain (703 aa).

Positions M1–S28 are cleaved as a signal peptide. The interval G29–K76 is nonhelical region (NC2). The segment at L70–L544 is disordered. A triple-helical region region spans residues G77–F536. The span at P79–P97 shows a compositional bias: pro residues. Positions P166–P192 are enriched in low complexity. A compositionally biased stretch (gly residues) spans G206 to A224. Composition is skewed to low complexity over residues E265 to P275 and A285 to A297. The segment covering G433–G442 has biased composition (gly residues). 2 stretches are compositionally biased toward low complexity: residues L444–S462 and P476–P486. The span at T506–A532 shows a compositional bias: pro residues. A nonhelical region (NC1) region spans residues D537 to T703. The C1q domain occupies S570–T703.

In terms of assembly, homotrimers, or heterotrimers in association with alpha 2(VIII) type collagens. Four homotrimers can form a tetrahedron stabilized by central interacting C-terminal NC1 trimers. Proteolytically cleaved by neutrophil elastase, in vitro. Post-translationally, prolines at the third position of the tripeptide repeating unit (G-X-Y) are hydroxylated in some or all of the chains. In terms of tissue distribution, expressed primarily in the subendothelium of large blood vessels. Also expressed in arterioles and venules in muscle, heart, kidney, spleen, umbilical cord, liver and lung and is also found in connective tissue layers around hair follicles, around nerve bundles in muscle, in the dura of the optic nerve, in cornea and sclera, and in the perichondrium of cartilaginous tissues. In the kidney, expressed in mesangial cells, glomerular endothelial cells, and tubular epithelial cells. Also expressed in mast cells, and in astrocytes during the repair process. Expressed in Descemet's membrane.

It localises to the secreted. It is found in the extracellular space. Its subcellular location is the extracellular matrix. The protein localises to the basement membrane. Its function is as follows. Macromolecular component of the subendothelium. Major component of the Descemet's membrane (basement membrane) of corneal endothelial cells. Also a component of the endothelia of blood vessels. Necessary for migration and proliferation of vascular smooth muscle cells and thus, has a potential role in the maintenance of vessel wall integrity and structure, in particular in atherogenesis. In Homo sapiens (Human), this protein is Collagen alpha-2(VIII) chain (COL8A2).